The following is a 398-amino-acid chain: MKILVLNAGSSSHKCCLYAIEGPLPDHPAPPLWEAQLDWHDPNHASLKVKTKRENLEEDLSDVSRADALSHLLTTLWHGPTQVIQMAQEINVVGHRVVHGGQDYQSSVVVTSEVKTAIADLIPLAPNHNPANLEGIKLIEQLLGNVRQVAVFDTAFHSHLPEVAAIYPGPYDWQQQGIRRYGFHGISHQYCTQRTAEILGRGVDRLIICHLGNGASLTAVKQGQSIDTSMGFTPLEGLMMGTRSGSIDPGILIHLMRQGYDADQLDHMLNKASGLKGISGVSHDLREIEQAIAQDNAQAKLARDLYLHRLKACLGSMLMSLGGVDVLVFTGGIGEHSASVRAETCEALAFLGLKLDPILNRKSPVDQDIAAVDSKVRVLVIKTQEDWAIAQSCYEQCC.

Asn7 contacts Mg(2+). Residue Lys14 participates in ATP binding. Substrate is bound at residue Arg96. The active-site Proton donor/acceptor is the Asp153. ATP-binding positions include 210 to 214 (HLGNG), 284 to 286 (DLR), and 332 to 336 (GIGEH). Glu385 is a binding site for Mg(2+).

The protein belongs to the acetokinase family. In terms of assembly, homodimer. Mg(2+) serves as cofactor. Requires Mn(2+) as cofactor.

The protein localises to the cytoplasm. It carries out the reaction acetate + ATP = acetyl phosphate + ADP. It participates in metabolic intermediate biosynthesis; acetyl-CoA biosynthesis; acetyl-CoA from acetate: step 1/2. Functionally, catalyzes the formation of acetyl phosphate from acetate and ATP. Can also catalyze the reverse reaction. In Acaryochloris marina (strain MBIC 11017), this protein is Acetate kinase.